Consider the following 453-residue polypeptide: Trigger factor (453 aa).

The PPIase FKBP-type domain maps to 171 to 256 (GDRVTISFKG…ATVLEAPQES (86 aa)).

Belongs to the FKBP-type PPIase family. Tig subfamily.

It localises to the cytoplasm. It catalyses the reaction [protein]-peptidylproline (omega=180) = [protein]-peptidylproline (omega=0). In terms of biological role, involved in protein export. Acts as a chaperone by maintaining the newly synthesized protein in an open conformation. Functions as a peptidyl-prolyl cis-trans isomerase. The sequence is that of Trigger factor from Rhodopseudomonas palustris (strain BisB18).